A 306-amino-acid polypeptide reads, in one-letter code: Acetylglutamate kinase (306 aa).

Substrate is bound by residues 75–76, Arg-97, and Asn-197; that span reads GG.

The protein belongs to the acetylglutamate kinase family. ArgB subfamily.

It localises to the cytoplasm. The enzyme catalyses N-acetyl-L-glutamate + ATP = N-acetyl-L-glutamyl 5-phosphate + ADP. The protein operates within amino-acid biosynthesis; L-arginine biosynthesis; N(2)-acetyl-L-ornithine from L-glutamate: step 2/4. In terms of biological role, catalyzes the ATP-dependent phosphorylation of N-acetyl-L-glutamate. The polypeptide is Acetylglutamate kinase (Streptomyces coelicolor (strain ATCC BAA-471 / A3(2) / M145)).